We begin with the raw amino-acid sequence, 71 residues long: UPF0499 protein ACLA_083080 (71 aa).

An N-terminal signal peptide occupies residues 1–18 (MKFLNILTLAFITGMASA). 3 disulfide bridges follow: Cys44–Cys58, Cys48–Cys61, and Cys54–Cys68.

This sequence belongs to the UPF0499 family.

The protein resides in the secreted. The protein is UPF0499 protein ACLA_083080 of Aspergillus clavatus (strain ATCC 1007 / CBS 513.65 / DSM 816 / NCTC 3887 / NRRL 1 / QM 1276 / 107).